The following is a 273-amino-acid chain: CUE domain-containing protein 2-A (273 aa).

Residues 92–121 are disordered; that stretch reads GKENVSPKPTAEVSFMTPTSSSTESSKKIE. The 44-residue stretch at 135–178 folds into the CUE domain; sequence DAKNGIDLLLEIFPSCTVSQAQTALSMAKGDLEDAVQIIVDGKV.

This sequence belongs to the CUEDC2 family. In terms of processing, phosphorylated.

Its subcellular location is the cytoplasm. The protein resides in the nucleus. Its function is as follows. May play a role in targeting proteins for ubiquitination and subsequent proteasomal degradation. This chain is CUE domain-containing protein 2-A (cuedc2-a), found in Xenopus laevis (African clawed frog).